A 278-amino-acid polypeptide reads, in one-letter code: Thiazole synthase (278 aa).

Lys109 serves as the catalytic Schiff-base intermediate with DXP. 1-deoxy-D-xylulose 5-phosphate is bound by residues Gly170, 197–198 (AG), and 219–220 (NT).

This sequence belongs to the ThiG family. As to quaternary structure, homotetramer. Forms heterodimers with either ThiH or ThiS.

Its subcellular location is the cytoplasm. The catalysed reaction is [ThiS sulfur-carrier protein]-C-terminal-Gly-aminoethanethioate + 2-iminoacetate + 1-deoxy-D-xylulose 5-phosphate = [ThiS sulfur-carrier protein]-C-terminal Gly-Gly + 2-[(2R,5Z)-2-carboxy-4-methylthiazol-5(2H)-ylidene]ethyl phosphate + 2 H2O + H(+). It participates in cofactor biosynthesis; thiamine diphosphate biosynthesis. Functionally, catalyzes the rearrangement of 1-deoxy-D-xylulose 5-phosphate (DXP) to produce the thiazole phosphate moiety of thiamine. Sulfur is provided by the thiocarboxylate moiety of the carrier protein ThiS. In vitro, sulfur can be provided by H(2)S. This chain is Thiazole synthase, found in Cupriavidus taiwanensis (strain DSM 17343 / BCRC 17206 / CCUG 44338 / CIP 107171 / LMG 19424 / R1) (Ralstonia taiwanensis (strain LMG 19424)).